A 107-amino-acid chain; its full sequence is UPF0060 membrane protein M446_5886 (107 aa).

4 consecutive transmembrane segments (helical) span residues 4 to 24 (LLAY…IWAW), 31 to 51 (PLWL…LTRV), 59 to 79 (AYAA…WAAE), and 85 to 105 (RWDL…LLGP).

This sequence belongs to the UPF0060 family.

The protein localises to the cell inner membrane. In Methylobacterium sp. (strain 4-46), this protein is UPF0060 membrane protein M446_5886.